Here is a 110-residue protein sequence, read N- to C-terminus: Large ribosomal subunit protein uL22 (110 aa).

Belongs to the universal ribosomal protein uL22 family. In terms of assembly, part of the 50S ribosomal subunit.

In terms of biological role, this protein binds specifically to 23S rRNA; its binding is stimulated by other ribosomal proteins, e.g. L4, L17, and L20. It is important during the early stages of 50S assembly. It makes multiple contacts with different domains of the 23S rRNA in the assembled 50S subunit and ribosome. Functionally, the globular domain of the protein is located near the polypeptide exit tunnel on the outside of the subunit, while an extended beta-hairpin is found that lines the wall of the exit tunnel in the center of the 70S ribosome. This chain is Large ribosomal subunit protein uL22, found in Nitrosomonas eutropha (strain DSM 101675 / C91 / Nm57).